Consider the following 358-residue polypeptide: DNA replication and repair protein RecF (358 aa).

Residue 30 to 37 (GANGSGKT) coordinates ATP.

Belongs to the RecF family.

The protein localises to the cytoplasm. The RecF protein is involved in DNA metabolism; it is required for DNA replication and normal SOS inducibility. RecF binds preferentially to single-stranded, linear DNA. It also seems to bind ATP. This chain is DNA replication and repair protein RecF, found in Edwardsiella ictaluri (strain 93-146).